Consider the following 505-residue polypeptide: Deoxyguanosinetriphosphate triphosphohydrolase (505 aa).

One can recognise an HD domain in the interval Arg-66–Cys-273.

It belongs to the dGTPase family. Type 1 subfamily. Homotetramer. Requires Mg(2+) as cofactor.

The catalysed reaction is dGTP + H2O = 2'-deoxyguanosine + triphosphate + H(+). In terms of biological role, dGTPase preferentially hydrolyzes dGTP over the other canonical NTPs. This Yersinia enterocolitica serotype O:8 / biotype 1B (strain NCTC 13174 / 8081) protein is Deoxyguanosinetriphosphate triphosphohydrolase.